A 589-amino-acid polypeptide reads, in one-letter code: MRTHFCGLIDETLIGHTVTLAGWTDVARNLGGVCFIDLRDHEGIVQVTVDSRAIDQNNSELFKVASGLSYEDVLQVEGVVCARHAVNDKIKTGKVEVIATKIKILNKAAPLPFHAHENPGEDIRLKYRYLDLRRPEMQRMQRTRIKLVQALRRHLDMHGFQDIETPILTKATPEGARDFLVPARMHPGEFYALPQSPQLFKQILMVAGFDRYYQIARCFRDEALRADRQLEFTQLDMEFAFVSERDVQDFVEEMIRRVFKEVAGIELDTTFPRMTWTEAMRRFGSDKPDLRINLELIDVAALVADSTFTPFTDAVAHPNGRVAALRIPSGAVLSRKQIDEYAAYTAKYGATGLAYAKLAPIGEITSPIAKFFSEDAFAALLSHIGAEKGDIVFFGAGNYNKVSDFMGALRLKAGKDFALITADWRPLWVTDFPMFEWDEEAQRYVALHHPFTAPAAIDDIDELRAHARTALSRGYDMVLNGNEIGGGSIRIHRPEMQRAVFELLGITEDEARAKFGFLLDALNYGAPPHGGIAFGIDRIAALIAGTESIRDVIPFPKTTGAQCLMTDAPSSISEEQLSEIHVITKKPTP.

Glu-174 contacts L-aspartate. Positions 198 to 201 (QLFK) are aspartate. L-aspartate is bound at residue Arg-220. ATP contacts are provided by residues 220–222 (RDE) and Gln-229. His-448 contacts L-aspartate. Glu-483 provides a ligand contact to ATP. Arg-490 contributes to the L-aspartate binding site. 535 to 538 (GIDR) lines the ATP pocket.

Belongs to the class-II aminoacyl-tRNA synthetase family. Type 1 subfamily. Homodimer.

It is found in the cytoplasm. The enzyme catalyses tRNA(Asp) + L-aspartate + ATP = L-aspartyl-tRNA(Asp) + AMP + diphosphate. Catalyzes the attachment of L-aspartate to tRNA(Asp) in a two-step reaction: L-aspartate is first activated by ATP to form Asp-AMP and then transferred to the acceptor end of tRNA(Asp). The sequence is that of Aspartate--tRNA ligase from Xylella fastidiosa (strain 9a5c).